The primary structure comprises 272 residues: uncharacterized protein (272 aa).

2 stretches are compositionally biased toward basic and acidic residues: residues Val-136 to Ile-156 and Gly-231 to Pro-240. 2 disordered regions span residues Val-136 to His-157 and Val-174 to Phe-272. The segment covering Asp-243–Pro-252 has biased composition (polar residues). The span at Ser-253–Phe-272 shows a compositional bias: low complexity.

This is an uncharacterized protein from Arabidopsis thaliana (Mouse-ear cress).